We begin with the raw amino-acid sequence, 908 residues long: Structural core protein VP2 (908 aa).

Polar residues predominate over residues 1–19; that stretch reads MANPQNRVQTERQQNNSSP. Residues 1 to 25 are disordered; the sequence is MANPQNRVQTERQQNNSSPYLRGDE.

The protein belongs to the orbivirus VP3 family.

The protein resides in the virion. This is Structural core protein VP2 (Segment-2) from Ixodes (gulls).